The chain runs to 215 residues: Ribonuclease T (215 aa).

The Exonuclease domain maps to 20 to 194; the sequence is VVIDVETAGF…YDTLQTAKLF (175 aa). Aspartate 23, glutamate 25, histidine 181, and aspartate 186 together coordinate Mg(2+). The active-site Proton donor/acceptor is the histidine 181.

This sequence belongs to the RNase T family. In terms of assembly, homodimer. It depends on Mg(2+) as a cofactor.

In terms of biological role, trims short 3' overhangs of a variety of RNA species, leaving a one or two nucleotide 3' overhang. Responsible for the end-turnover of tRNA: specifically removes the terminal AMP residue from uncharged tRNA (tRNA-C-C-A). Also appears to be involved in tRNA biosynthesis. In Yersinia pseudotuberculosis serotype I (strain IP32953), this protein is Ribonuclease T.